Here is a 411-residue protein sequence, read N- to C-terminus: Peptidase T (411 aa).

His-79 contacts Zn(2+). Asp-81 is an active-site residue. Asp-142 lines the Zn(2+) pocket. The Proton acceptor role is filled by Glu-176. The Zn(2+) site is built by Glu-177, Asp-199, and His-381.

Belongs to the peptidase M20B family. It depends on Zn(2+) as a cofactor.

It is found in the cytoplasm. It catalyses the reaction Release of the N-terminal residue from a tripeptide.. Its function is as follows. Cleaves the N-terminal amino acid of tripeptides. This chain is Peptidase T, found in Exiguobacterium sibiricum (strain DSM 17290 / CCUG 55495 / CIP 109462 / JCM 13490 / 255-15).